A 393-amino-acid chain; its full sequence is Formate-dependent phosphoribosylglycinamide formyltransferase (393 aa).

Residues 22–23 (EL) and Glu-82 each bind N(1)-(5-phospho-beta-D-ribosyl)glycinamide. ATP-binding positions include Arg-114, Lys-155, 160–165 (SSGHGQ), 195–198 (EGFV), and Glu-203. The ATP-grasp domain occupies 119–308 (RLAAEKLKLP…EFALHARAIL (190 aa)). Glu-267 and Glu-279 together coordinate Mg(2+). N(1)-(5-phospho-beta-D-ribosyl)glycinamide contacts are provided by residues Asp-286, Lys-356, and 363-364 (RR).

Belongs to the PurK/PurT family. Homodimer.

The enzyme catalyses N(1)-(5-phospho-beta-D-ribosyl)glycinamide + formate + ATP = N(2)-formyl-N(1)-(5-phospho-beta-D-ribosyl)glycinamide + ADP + phosphate + H(+). The protein operates within purine metabolism; IMP biosynthesis via de novo pathway; N(2)-formyl-N(1)-(5-phospho-D-ribosyl)glycinamide from N(1)-(5-phospho-D-ribosyl)glycinamide (formate route): step 1/1. Functionally, involved in the de novo purine biosynthesis. Catalyzes the transfer of formate to 5-phospho-ribosyl-glycinamide (GAR), producing 5-phospho-ribosyl-N-formylglycinamide (FGAR). Formate is provided by PurU via hydrolysis of 10-formyl-tetrahydrofolate. This chain is Formate-dependent phosphoribosylglycinamide formyltransferase, found in Histophilus somni (strain 129Pt) (Haemophilus somnus).